Here is a 400-residue protein sequence, read N- to C-terminus: Elongation factor Tu (400 aa).

A tr-type G domain is found at 10 to 210 (KPHVNVGTIG…ALDSYIPEPV (201 aa)). The tract at residues 19–26 (GHVDHGKT) is G1. 19–26 (GHVDHGKT) contributes to the GTP binding site. A Mg(2+)-binding site is contributed by threonine 26. The tract at residues 66–70 (ILTIA) is G2. The interval 87-90 (DCPG) is G3. GTP-binding positions include 87 to 91 (DCPGH) and 142 to 145 (NKCD). Positions 142–145 (NKCD) are G4. The tract at residues 180-182 (SAI) is G5.

The protein belongs to the TRAFAC class translation factor GTPase superfamily. Classic translation factor GTPase family. EF-Tu/EF-1A subfamily. In terms of assembly, monomer.

The protein localises to the cytoplasm. It carries out the reaction GTP + H2O = GDP + phosphate + H(+). In terms of biological role, GTP hydrolase that promotes the GTP-dependent binding of aminoacyl-tRNA to the A-site of ribosomes during protein biosynthesis. The chain is Elongation factor Tu from Gemmatimonas aurantiaca (strain DSM 14586 / JCM 11422 / NBRC 100505 / T-27).